A 1125-amino-acid chain; its full sequence is Angiopoietin-1 receptor (1125 aa).

Residues 1-22 (MDSLAGLVLCGVSLLLSATVDG) form the signal peptide. At 23-748 (AMDLILINSL…PADLGGRKML (726 aa)) the chain is on the extracellular side. Cysteines 44 and 102 form a disulfide. The Ig-like C2-type 1 domain maps to 44 to 123 (CIASGWRPHE…RTMKMRQQAS (80 aa)). N158 carries N-linked (GlcNAc...) asparagine glycosylation. EGF-like domains are found at residues 210-252 (RCEA…RTCE), 254-299 (ACEP…LQCN), and 301-341 (ACQP…LQCE). Disulfide bonds link C211–C220, C224–C233, C227–C240, C242–C251, C255–C264, C268–C274, C280–C287, C289–C298, C302–C311, C315–C323, C317–C329, C331–C340, and C370–C424. The 91-residue stretch at 350–440 (PKIEDLPDHI…GMVEKPFNIS (91 aa)) folds into the Ig-like C2-type 2 domain. 3 consecutive Fibronectin type-III domains span residues 447-541 (PLNA…TASI), 545-637 (PPRG…TLSD), and 642-735 (QPEN…TLSE). The chain crosses the membrane as a helical span at residues 749 to 769 (LIAILGSAGMTCLTVLLAFLI). At 770–1125 (MLQLKRANVQ…GIDCSAEEAA (356 aa)) the chain is on the cytoplasmic side. The Protein kinase domain occupies 825–1097 (IKFQDVIGEG…QILVSLNRML (273 aa)). Residues 831–839 (IGEGNFGQV) and K856 contribute to the ATP site. Y861 carries the post-translational modification Phosphotyrosine; by autocatalysis. Catalysis depends on D965, which acts as the Proton acceptor. Phosphotyrosine; by autocatalysis is present on residues Y993, Y1103, and Y1109.

It belongs to the protein kinase superfamily. Tyr protein kinase family. Tie subfamily. Homodimer. Heterodimer with TIE1. Interacts with ANGPT1, ANGPT2 and ANGPT4. At cell-cell contacts in quiescent cells, forms a signaling complex composed of ANGPT1 plus TEK molecules from two adjoining cells. In the absence of endothelial cell-cell contacts, interaction with ANGPT1 mediates contacts with the extracellular matrix. Interacts (tyrosine phosphorylated) with TNIP2. Interacts (tyrosine phosphorylated) with SHC1 (via SH2 domain). Interacts with PTPRB; this promotes endothelial cell-cell adhesion. Interacts with DOK2, GRB2, GRB7, GRB14, PIK3R1 and PTPN11/SHP2. Colocalizes with DOK2 at contacts with the extracellular matrix in migrating cells. Proteolytic processing leads to the shedding of the extracellular domain (soluble TIE-2 alias sTIE-2). In terms of processing, autophosphorylated on tyrosine residues in response to ligand binding. Autophosphorylation occurs in trans, i.e. one subunit of the dimeric receptor phosphorylates tyrosine residues on the other subunit. Autophosphorylation occurs in a sequential manner, where Tyr-993 in the kinase activation loop is phosphorylated first, followed by autophosphorylation at Tyr-1109 and at additional tyrosine residues. ANGPT1-induced phosphorylation is impaired during hypoxia, due to increased expression of ANGPT2. Phosphorylation is important for interaction with GRB14, PIK3R1 and PTPN11. Phosphorylation at Tyr-1103 is important for interaction with GRB2 and GRB7. Phosphorylation at Tyr-1109 is important for interaction with DOK2 and for coupling to downstream signal transduction pathways in endothelial cells. Dephosphorylated by PTPRB. Post-translationally, ubiquitinated. The phosphorylated receptor is ubiquitinated and internalized, leading to its degradation. As to expression, specifically expressed in developing vascular endothelial cells.

Its subcellular location is the cell membrane. It is found in the cell junction. It localises to the focal adhesion. The protein localises to the cytoplasm. The protein resides in the cytoskeleton. Its subcellular location is the secreted. It catalyses the reaction L-tyrosyl-[protein] + ATP = O-phospho-L-tyrosyl-[protein] + ADP + H(+). Its activity is regulated as follows. Angiopoietin binding leads to receptor dimerization and activation by autophosphorylation at Tyr-993 on the kinase activation loop. In terms of biological role, tyrosine-protein kinase that acts as a cell-surface receptor for ANGPT1, ANGPT2 and ANGPT4 and regulates angiogenesis, endothelial cell survival, proliferation, migration, adhesion and cell spreading, reorganization of the actin cytoskeleton, but also maintenance of vascular quiescence. Has anti-inflammatory effects by preventing the leakage of pro-inflammatory plasma proteins and leukocytes from blood vessels. Required for normal angiogenesis and heart development during embryogenesis. Required for post-natal hematopoiesis. After birth, activates or inhibits angiogenesis, depending on the context. Inhibits angiogenesis and promotes vascular stability in quiescent vessels, where endothelial cells have tight contacts. In quiescent vessels, ANGPT1 oligomers recruit TEK to cell-cell contacts, forming complexes with TEK molecules from adjoining cells, and this leads to preferential activation of phosphatidylinositol 3-kinase and the AKT1 signaling cascades. In migrating endothelial cells that lack cell-cell adhesions, ANGT1 recruits TEK to contacts with the extracellular matrix, leading to the formation of focal adhesion complexes, activation of PTK2/FAK and of the downstream kinases MAPK1/ERK2 and MAPK3/ERK1, and ultimately to the stimulation of sprouting angiogenesis. ANGPT1 signaling triggers receptor dimerization and autophosphorylation at specific tyrosine residues that then serve as binding sites for scaffold proteins and effectors. Signaling is modulated by ANGPT2 that has lower affinity for TEK, can promote TEK autophosphorylation in the absence of ANGPT1, but inhibits ANGPT1-mediated signaling by competing for the same binding site. Signaling is also modulated by formation of heterodimers with TIE1, and by proteolytic processing that gives rise to a soluble TEK extracellular domain. The soluble extracellular domain modulates signaling by functioning as decoy receptor for angiopoietins. TEK phosphorylates DOK2, GRB7, GRB14, PIK3R1, SHC1 and TIE1. The protein is Angiopoietin-1 receptor (TEK) of Bos taurus (Bovine).